A 214-amino-acid chain; its full sequence is MSRLALTRADEPMTAARVGIGGPVGSGKTALVERLIPALQTRGIDIAVITNDLVTAEDAERVRRSGLIDPERVSAVEAGACPHTVIREDPTLNIEAADELERRFPGVELILLESGGDNLASTFSRDLTDFWMFVIDVAGGDDIPRKRGPGVIRADLLVINKVDLAPHVGVDLGRMQREATEVRGGRPVLLTNCRRGEGIEAIVDLLEREVLFRK.

22-29 (GPVGSGKT) is a binding site for GTP.

It belongs to the SIMIBI class G3E GTPase family. UreG subfamily. In terms of assembly, homodimer. UreD, UreF and UreG form a complex that acts as a GTP-hydrolysis-dependent molecular chaperone, activating the urease apoprotein by helping to assemble the nickel containing metallocenter of UreC. The UreE protein probably delivers the nickel.

Its subcellular location is the cytoplasm. Its function is as follows. Facilitates the functional incorporation of the urease nickel metallocenter. This process requires GTP hydrolysis, probably effectuated by UreG. This is Urease accessory protein UreG 2 from Bradyrhizobium sp. (strain BTAi1 / ATCC BAA-1182).